A 246-amino-acid chain; its full sequence is Acetoacetyl-CoA reductase (246 aa).

Residues 12–14 (GGI) and 88–92 (CAGIT) each bind NADP(+). Residues Asp-94 and 147–150 (QFGQ) each bind substrate. Catalysis depends on Tyr-153, which acts as the Proton acceptor. 183–186 (PGYV) provides a ligand contact to NADP(+). 184-185 (GY) is a binding site for substrate.

It belongs to the short-chain dehydrogenases/reductases (SDR) family.

It is found in the cytoplasm. The enzyme catalyses a (3R)-3-hydroxyacyl-CoA + NADP(+) = a 3-oxoacyl-CoA + NADPH + H(+). Its pathway is biopolymer metabolism; poly-(R)-3-hydroxybutanoate biosynthesis. This is Acetoacetyl-CoA reductase from Allochromatium vinosum (strain ATCC 17899 / DSM 180 / NBRC 103801 / NCIMB 10441 / D) (Chromatium vinosum).